A 432-amino-acid chain; its full sequence is MAKNVVVVGTQWGDEGKGKIVDWLTDHSQGVVRFQGGHNAGHTLVIGGHKTALQLIPSGIMREGVACYIGNGVVLSVPDVLREIDKLHAIGVEVPSRLKISEACPIILPYHTALDVAREVARGDAKIGTTGKGIGPAYEDKVARRAIRAADLLNEKRFAEKLRENLDYHNFVLANYLKVATVDYQKTLDDALADVPRLKPMVGDVSSALYAAFNAGANLLFEGAQGSLLDVDHGTYPYVTSSNCVAGNASTGSGVGPGMLHYILGITKAYTTRVGSGPFPSELPTDQGVGKHLATVGHEFGTVTGRARRCGWFDAALLKRSVQINGVTGMCFTKLDVLDGLETLRICTGYKLNGKIVDIFPVGAEDAAACEPIYEEMPGWKEATVGAKTLEALPANARAYIDRIEKLVGVPIDMISTGPDREETIVLRHPFK.

Residues 13–19 (GDEGKGK) and 41–43 (GHT) contribute to the GTP site. D14 acts as the Proton acceptor in catalysis. 2 residues coordinate Mg(2+): D14 and G41. IMP-binding positions include 14-17 (DEGK), 39-42 (NAGH), T130, R144, Q225, T240, and R306. The active-site Proton donor is H42. 302-308 (TVTGRAR) serves as a coordination point for substrate. GTP contacts are provided by residues R308, 334-336 (KLD), and 416-418 (STG).

Belongs to the adenylosuccinate synthetase family. In terms of assembly, homodimer. The cofactor is Mg(2+).

The protein resides in the cytoplasm. It catalyses the reaction IMP + L-aspartate + GTP = N(6)-(1,2-dicarboxyethyl)-AMP + GDP + phosphate + 2 H(+). It functions in the pathway purine metabolism; AMP biosynthesis via de novo pathway; AMP from IMP: step 1/2. In terms of biological role, plays an important role in the de novo pathway of purine nucleotide biosynthesis. Catalyzes the first committed step in the biosynthesis of AMP from IMP. The sequence is that of Adenylosuccinate synthetase from Herminiimonas arsenicoxydans.